A 445-amino-acid chain; its full sequence is Chromosome partition protein MukF (445 aa).

Positions 212–240 (LDETSGNLRELQDTLNAAGDKLQEQLLRI) are leucine-zipper.

The protein belongs to the MukF family. As to quaternary structure, interacts, and probably forms a ternary complex, with MukE and MukB via its C-terminal region. The complex formation is stimulated by calcium or magnesium. It is required for an interaction between MukE and MukB.

The protein localises to the cytoplasm. Its subcellular location is the nucleoid. Its function is as follows. Involved in chromosome condensation, segregation and cell cycle progression. May participate in facilitating chromosome segregation by condensation DNA from both sides of a centrally located replisome during cell division. Not required for mini-F plasmid partitioning. Probably acts via its interaction with MukB and MukE. Overexpression results in anucleate cells. It has a calcium binding activity. In Mannheimia succiniciproducens (strain KCTC 0769BP / MBEL55E), this protein is Chromosome partition protein MukF.